We begin with the raw amino-acid sequence, 497 residues long: Protein DETOXIFICATION 25 (497 aa).

The next 12 helical transmembrane spans lie at 43 to 63 (LPST…QAFI), 70 to 90 (GLAA…GIMA), 121 to 141 (IVDT…GPIL), 157 to 177 (IYPW…MQMY), 186 to 206 (IIGI…WWCV), 216 to 236 (ALLG…VYVF), 261 to 281 (LSIS…IIVL), 291 to 311 (IAIS…NICF), 339 to 359 (VVLV…LAFG), 381 to 401 (IVLS…GVAI), 416 to 436 (SYYA…NFGI), and 438 to 458 (GLWS…CYVI).

This sequence belongs to the multi antimicrobial extrusion (MATE) (TC 2.A.66.1) family.

It is found in the membrane. The chain is Protein DETOXIFICATION 25 from Arabidopsis thaliana (Mouse-ear cress).